The chain runs to 48 residues: Delta-stichotoxin-Hmg4a (48 aa).

3 disulfides stabilise this stretch: C3–C43, C5–C33, and C26–C44.

The protein belongs to the sea anemone sodium channel inhibitory toxin family. Type II subfamily.

The protein resides in the secreted. Its subcellular location is the nematocyst. Its function is as follows. Binds specifically to voltage-gated sodium channels (Nav), thereby delaying their inactivation during signal transduction. Its toxicity is weaker than that of RpIII (AC P08380). The protein is Delta-stichotoxin-Hmg4a of Heteractis magnifica (Magnificent sea anemone).